The chain runs to 904 residues: Phosphoenolpyruvate carboxylase (904 aa).

Catalysis depends on residues His-151 and Lys-570.

Belongs to the PEPCase type 1 family. Mg(2+) is required as a cofactor.

It catalyses the reaction oxaloacetate + phosphate = phosphoenolpyruvate + hydrogencarbonate. Its function is as follows. Forms oxaloacetate, a four-carbon dicarboxylic acid source for the tricarboxylic acid cycle. This Xanthomonas campestris pv. campestris (strain 8004) protein is Phosphoenolpyruvate carboxylase.